The primary structure comprises 142 residues: Peptide methionine sulfoxide reductase MsrB (142 aa).

Residues isoleucine 2–tyrosine 125 enclose the MsrB domain. Catalysis depends on cysteine 114, which acts as the Nucleophile.

The protein belongs to the MsrB Met sulfoxide reductase family.

It carries out the reaction L-methionyl-[protein] + [thioredoxin]-disulfide + H2O = L-methionyl-(R)-S-oxide-[protein] + [thioredoxin]-dithiol. The protein is Peptide methionine sulfoxide reductase MsrB of Staphylococcus saprophyticus subsp. saprophyticus (strain ATCC 15305 / DSM 20229 / NCIMB 8711 / NCTC 7292 / S-41).